A 362-amino-acid chain; its full sequence is Histidinol-phosphate aminotransferase (362 aa).

The residue at position 210 (Lys210) is an N6-(pyridoxal phosphate)lysine.

This sequence belongs to the class-II pyridoxal-phosphate-dependent aminotransferase family. Histidinol-phosphate aminotransferase subfamily. Homodimer. Requires pyridoxal 5'-phosphate as cofactor.

The catalysed reaction is L-histidinol phosphate + 2-oxoglutarate = 3-(imidazol-4-yl)-2-oxopropyl phosphate + L-glutamate. The protein operates within amino-acid biosynthesis; L-histidine biosynthesis; L-histidine from 5-phospho-alpha-D-ribose 1-diphosphate: step 7/9. In Rhodopirellula baltica (strain DSM 10527 / NCIMB 13988 / SH1), this protein is Histidinol-phosphate aminotransferase.